Reading from the N-terminus, the 193-residue chain is Holliday junction branch migration complex subunit RuvA (193 aa).

The domain I stretch occupies residues 1 to 63 (MIAHIQGKLV…EDSHSLYGFA (63 aa)). Residues 64–142 (EKSEKEIFKL…KLYDLDQVSI (79 aa)) are domain II. The interval 143 to 145 (SQS) is flexible linker. The segment at 145-193 (SNTNKDEALSALEVLGFIRKSAEKVVEKIVATMPDATVETIIKQALKNL) is domain III.

It belongs to the RuvA family. Homotetramer. Forms an RuvA(8)-RuvB(12)-Holliday junction (HJ) complex. HJ DNA is sandwiched between 2 RuvA tetramers; dsDNA enters through RuvA and exits via RuvB. An RuvB hexamer assembles on each DNA strand where it exits the tetramer. Each RuvB hexamer is contacted by two RuvA subunits (via domain III) on 2 adjacent RuvB subunits; this complex drives branch migration. In the full resolvosome a probable DNA-RuvA(4)-RuvB(12)-RuvC(2) complex forms which resolves the HJ.

The protein localises to the cytoplasm. Its function is as follows. The RuvA-RuvB-RuvC complex processes Holliday junction (HJ) DNA during genetic recombination and DNA repair, while the RuvA-RuvB complex plays an important role in the rescue of blocked DNA replication forks via replication fork reversal (RFR). RuvA specifically binds to HJ cruciform DNA, conferring on it an open structure. The RuvB hexamer acts as an ATP-dependent pump, pulling dsDNA into and through the RuvAB complex. HJ branch migration allows RuvC to scan DNA until it finds its consensus sequence, where it cleaves and resolves the cruciform DNA. This chain is Holliday junction branch migration complex subunit RuvA, found in Flavobacterium psychrophilum (strain ATCC 49511 / DSM 21280 / CIP 103535 / JIP02/86).